Consider the following 285-residue polypeptide: Acetyl-coenzyme A carboxylase carboxyl transferase subunit beta (285 aa).

The CoA carboxyltransferase N-terminal domain maps to 29 to 285 (IMTKCPKCKK…ILKIHQEVTK (257 aa)). Residues Cys33, Cys36, Cys52, and Cys55 each coordinate Zn(2+). The C4-type zinc finger occupies 33–55 (CPKCKKIMYTKELAENLNVCFNC).

It belongs to the AccD/PCCB family. Acetyl-CoA carboxylase is a heterohexamer composed of biotin carboxyl carrier protein (AccB), biotin carboxylase (AccC) and two subunits each of ACCase subunit alpha (AccA) and ACCase subunit beta (AccD). The cofactor is Zn(2+).

The protein resides in the cytoplasm. The enzyme catalyses N(6)-carboxybiotinyl-L-lysyl-[protein] + acetyl-CoA = N(6)-biotinyl-L-lysyl-[protein] + malonyl-CoA. It functions in the pathway lipid metabolism; malonyl-CoA biosynthesis; malonyl-CoA from acetyl-CoA: step 1/1. Component of the acetyl coenzyme A carboxylase (ACC) complex. Biotin carboxylase (BC) catalyzes the carboxylation of biotin on its carrier protein (BCCP) and then the CO(2) group is transferred by the transcarboxylase to acetyl-CoA to form malonyl-CoA. This chain is Acetyl-coenzyme A carboxylase carboxyl transferase subunit beta, found in Staphylococcus aureus (strain Mu3 / ATCC 700698).